Reading from the N-terminus, the 855-residue chain is MICAL-like protein 1 (855 aa).

Residues 2-108 (AGPRGALLAW…YVSQYYNHFT (107 aa)) enclose the Calponin-homology (CH) domain. Disordered stretches follow at residues 110-165 (SGQA…SSAC), 226-253 (GRSGTRPLSLQKQQPAAAAEAKDGEDSD), and 269-659 (QASS…HGFP). Low complexity predominate over residues 124–135 (PAAPSPTSTSPA). In terms of domain architecture, LIM zinc-binding spans 163–226 (SACAACGQRV…ERCTRLGLGG (64 aa)). Residues 269 to 278 (QASSEVQPHT) show a composition bias toward polar residues. Phosphoserine occurs at positions 293 and 307. Positions 308 to 325 (ESSALTPPTPRPRSSLQQ) are enriched in polar residues. Thr313 and Thr316 each carry phosphothreonine. Residues 356–367 (LSERMTAPRKDP) show a composition bias toward basic and acidic residues. The short motif at 423–425 (NPF) is the NPF1 element. A compositionally biased stretch (acidic residues) spans 425-434 (FEEEEEEEEA). A compositionally biased stretch (pro residues) spans 439 to 449 (VPSPAPAPPET). Phosphothreonine is present on residues Thr461 and Thr463. Residues Ser464, Ser465, Ser478, and Ser480 each carry the phosphoserine modification. Positions 499–514 (PSPALSVESLSSESSS) are enriched in low complexity. Polar residues predominate over residues 542 to 554 (PGTSANSVTPSAH). Residues 555–570 (SSLSSSGELGQPSGEQ) show a composition bias toward low complexity. Ser613 carries the post-translational modification Phosphoserine. Residues 625–627 (NPF) carry the NPF2 motif. Residues 644-855 (KGAKPVRPPA…AKSKAPTGKS (212 aa)) form a mediates the interaction with RAB13 and intramolecular interaction with the calponin-homology (CH) domain region. A bMERB domain is found at 663 to 810 (RKVQADQYIP…EEEEDKMLET (148 aa)). Residues 679–703 (EMDSIERQLDALEHSGVLLEEKLRG) adopt a coiled-coil conformation. Phosphoserine is present on residues Ser682 and Ser732. The interval 692 to 855 (HSGVLLEEKL…AKSKAPTGKS (164 aa)) is necessary and sufficient to associate with tubular recycling endosome membranes, mediate phosphatidic acid-binding and membrane tubulation. A coiled-coil region spans residues 794–822 (LDEDRQREEEEDKMLETMIKKKDFQREAE). Positions 815 to 826 (KDFQREAESDSK) are enriched in basic and acidic residues. Residues 815–855 (KDFQREAESDSKKKGKFKTMKVLKLLGNKRDAKSKAPTGKS) form a disordered region.

As to quaternary structure, homooligomer. Interacts (via NPF1 motif) with EHD1 (via EH domain); the interaction is direct and probably recruits EHD1 to membranes. Interacts with EHD3 (via EH domain). Interacts with RAB35 (GTP-bound form); the interaction is direct and probably recruits MICALL1 to membranes. Interacts with ACAP2; the interaction is indirect through RAB35. Interacts with RAB8A (GTP-bound form); regulates RAB8A association with recycling endosomes. Interacts with RAB13 (GTP-bound form). Interacts with ARF6 (GTP-bound form). Interacts with PACSIN2 (via the SH3 domain). Interacts with DPYSL2.

It is found in the recycling endosome membrane. The protein resides in the late endosome membrane. It localises to the cell projection. Its subcellular location is the cilium membrane. The protein localises to the cytoplasm. It is found in the cytoskeleton. The protein resides in the microtubule organizing center. It localises to the centrosome. Its subcellular location is the centriole. Lipid-binding protein with higher affinity for phosphatidic acid, a lipid enriched in recycling endosome membranes. On endosome membranes, acts as a downstream effector of Rab proteins recruiting cytosolic proteins to regulate membrane tubulation. Involved in a late step of receptor-mediated endocytosis regulating for instance endocytosed-EGF receptor trafficking. Alternatively, regulates slow endocytic recycling of endocytosed proteins back to the plasma membrane. Also involved in cargo protein delivery to the plasma membrane. Plays a role in ciliogenesis coordination, recruits EHD1 to primary cilium where it is anchored to the centriole through interaction with tubulins. May indirectly play a role in neurite outgrowth. The sequence is that of MICAL-like protein 1 (Micall1) from Rattus norvegicus (Rat).